The sequence spans 202 residues: LexA repressor (202 aa).

Positions 28–47 form a DNA-binding region, H-T-H motif; it reads IREIGDQFGITAKGAYDHLK. Residues Ser-126 and Lys-163 each act as for autocatalytic cleavage activity in the active site.

Belongs to the peptidase S24 family. Homodimer.

It carries out the reaction Hydrolysis of Ala-|-Gly bond in repressor LexA.. In terms of biological role, represses a number of genes involved in the response to DNA damage (SOS response), including recA and lexA. In the presence of single-stranded DNA, RecA interacts with LexA causing an autocatalytic cleavage which disrupts the DNA-binding part of LexA, leading to derepression of the SOS regulon and eventually DNA repair. The chain is LexA repressor from Leptospira biflexa serovar Patoc (strain Patoc 1 / Ames).